Reading from the N-terminus, the 157-residue chain is MLSQSTLFLLLLMAIALIAKNQSLIIAISVLLLIKWTGLGDKVFPLMQAKGINLGVTIITIAVLVPIATGDIGFKQLGEATKSLYAWVALGSGIAVALVAASGIDLLKNDPHITAALVLGTIVAVSFLNGVAVGPLIGAGIAYLTMRAIQYIAQLWG.

4 helical membrane passes run 8–28 (FLLL…IIAI), 54–74 (LGVT…DIGF), 84–104 (LYAW…ASGI), and 117–137 (LVLG…GPLI).

The protein belongs to the UPF0756 family.

The protein localises to the cell membrane. This is UPF0756 membrane protein ABC2716 from Shouchella clausii (strain KSM-K16) (Alkalihalobacillus clausii).